The primary structure comprises 87 residues: uncharacterized protein (87 aa).

A helical transmembrane segment spans residues 42–62 (LADALYSAGSAAFTIAASLVA).

This sequence belongs to the SPP1 holin family.

It localises to the membrane. This is an uncharacterized protein from Bacillus licheniformis.